The chain runs to 697 residues: Protein Niban 3 (697 aa).

The interval methionine 1–leucine 48 is disordered.

This sequence belongs to the Niban family. Specifically expressed in B-lymphocytes.

The protein is Protein Niban 3 of Homo sapiens (Human).